We begin with the raw amino-acid sequence, 819 residues long: Lon protease (819 aa).

A compositionally biased stretch (polar residues) spans 1–14 (MNSTNNTDSQNLDP). Residues 1-41 (MNSTNNTDSQNLDPNASEVEKLLDESAEAEEKTDDHTPPSE) form a disordered region. Residues 18-38 (EVEKLLDESAEAEEKTDDHTP) show a composition bias toward basic and acidic residues. The Lon N-terminal domain occupies 42–239 (LFILPLNKRP…KALVLLKKEL (198 aa)). 392-399 (GPPGVGKT) provides a ligand contact to ATP. The 185-residue stretch at 634–818 (KTPVGVATGL…DDVFKIAFPG (185 aa)) folds into the Lon proteolytic domain. Residues serine 724 and lysine 767 contribute to the active site.

This sequence belongs to the peptidase S16 family. Homohexamer. Organized in a ring with a central cavity.

It localises to the cytoplasm. It catalyses the reaction Hydrolysis of proteins in presence of ATP.. ATP-dependent serine protease that mediates the selective degradation of mutant and abnormal proteins as well as certain short-lived regulatory proteins. Required for cellular homeostasis and for survival from DNA damage and developmental changes induced by stress. Degrades polypeptides processively to yield small peptide fragments that are 5 to 10 amino acids long. Binds to DNA in a double-stranded, site-specific manner. This Chlamydia muridarum (strain MoPn / Nigg) protein is Lon protease.